The following is a 481-amino-acid chain: ATP synthase subunit beta (481 aa).

160-167 contacts ATP; the sequence is GGAGVGKT.

Belongs to the ATPase alpha/beta chains family. As to quaternary structure, F-type ATPases have 2 components, CF(1) - the catalytic core - and CF(0) - the membrane proton channel. CF(1) has five subunits: alpha(3), beta(3), gamma(1), delta(1), epsilon(1). CF(0) has three main subunits: a(1), b(2) and c(9-12). The alpha and beta chains form an alternating ring which encloses part of the gamma chain. CF(1) is attached to CF(0) by a central stalk formed by the gamma and epsilon chains, while a peripheral stalk is formed by the delta and b chains.

The protein resides in the cell inner membrane. It catalyses the reaction ATP + H2O + 4 H(+)(in) = ADP + phosphate + 5 H(+)(out). In terms of biological role, produces ATP from ADP in the presence of a proton gradient across the membrane. The catalytic sites are hosted primarily by the beta subunits. The protein is ATP synthase subunit beta of Myxococcus xanthus (strain DK1622).